The chain runs to 511 residues: FAD-dependent monooxygenase AOL_s00215g279 (511 aa).

The signal sequence occupies residues 1-17; that stretch reads MRFTLYGLLGFASLLHA. Residues 85 to 256 enclose the FAD-binding PCMH-type domain; sequence CWVNPACIVS…TEFDLRTRYS (172 aa). His-122 bears the Pros-8alpha-FAD histidine mark.

The protein belongs to the oxygen-dependent FAD-linked oxidoreductase family.

It participates in secondary metabolite biosynthesis; terpenoid biosynthesis. FAD-dependent monooxygenase; part of the gene cluster that mediates the biosynthesis of sesquiterpenyl epoxy-cyclohexenoids (SECs) such as anthrobotrisins and arthrosporols, metabolites that possess a novel hybrid carbon skeleton consisting of a polyketide-derived epoxycyclohexenol combined with a terpenoid-derived monocyclic sesquiterpenol substructure (PKS-PTS hybrid). The SEC pathway plays an important role for fungal soil colonization via decreasing fungal nematode-capturing ability. Within the pathway, the FAD-dependent monooxygenase AOL_s00215g279 plays a role in the oxygenation of the phenol moiety, most likely in the epoxy formation. The pathway begins with the biosynthesis of 6-methylsalicylic acid (6-MSA), the first precursor of the polyketide-derived epoxycyclohexenol in arthrosporols, by the polyketide synthase (PKS) AOL_s00215g283 via condensation of 1 acetate and 3 malonate units. The 6-methylsalicylic acid decarboxylase AOL_s00215g281 then catalyzes the decarboxylation of 6-methylsalicylic acid to yield m-cresol. The cytochrome P450 monooxygenase AOL_s00215g282 further oxidizes m-cresol to yield toluquinol. With the assistance of the oxidoreductase AOL_s00215g277, the polyprenyl transferase AOL_s00215g276 catalyzes the farnesylation of toluquinol to produce farnesyl hydroquinone, the hybrid precursor for biosynthesis of SECs. Farnesyl hydroquinone undergoes epoxidation and then subsequent dehydrogenation to form farnesyl epoxy-quinone, the first and simplest SEC. The cytochrome P450 monooxygenase AOL_s00215g278 and the FAD-dependent monooxygenase AOL_s00215g279 might be involved in the oxygenation of the phenol moiety, most likely in the epoxy formation. The cytochrome P450 monooxygenases AOL_s00215g274 and AOL_s00215g280 are involved in specific regional ketone reductions at respectively C-4 and C-1 of farnesyl epoxy-quinone PubMed:33823587. The polypeptide is FAD-dependent monooxygenase AOL_s00215g279 (Arthrobotrys oligospora (strain ATCC 24927 / CBS 115.81 / DSM 1491) (Nematode-trapping fungus)).